The sequence spans 514 residues: Na(+)/H(+) antiporter NhaB (514 aa).

Transmembrane regions (helical) follow at residues 23–43, 63–83, 97–117, 120–140, 144–164, 202–222, 238–258, 303–323, 357–377, 391–411, 447–467, and 475–495; these read LALLVFLIVNPFIFLANPFIA, PLLPGGLLAIEAVIIGMTSAA, LLLMFMVAGIYFMKQLLLFIF, LLLSIRSKMVLSLAFCVAAAF, FLDALTVVAVVISVAVGFYGI, LMMHAGVGTALGGVMTMVGEP, FFLRMSPVTVPVLVCGLLTCM, AVIGVWLVTALALHLAEVGLI, LTVFFSIVAVIIDQHLFAPII, LFYLFNGLLSSISDNVFVGTI, ATPNGQAAFLFLLTSALAPLI, and VWMALPYTIVLTLIGLLCVEF.

The protein belongs to the NhaB Na(+)/H(+) (TC 2.A.34) antiporter family.

It localises to the cell inner membrane. It carries out the reaction 2 Na(+)(in) + 3 H(+)(out) = 2 Na(+)(out) + 3 H(+)(in). Its function is as follows. Na(+)/H(+) antiporter that extrudes sodium in exchange for external protons. This Salmonella gallinarum (strain 287/91 / NCTC 13346) protein is Na(+)/H(+) antiporter NhaB.